A 539-amino-acid polypeptide reads, in one-letter code: Probable 1,4-beta-D-glucan cellobiohydrolase B (539 aa).

The signal sequence occupies residues 1 to 26 (MLPSTISYRIYKNALFFAALFGAVQA). Residues 27–461 (QKVGTSKAEV…SNIKVGPIGS (435 aa)) form a catalytic region. An N-linked (GlcNAc...) asparagine glycan is attached at Asn90. Glu238 functions as the Nucleophile in the catalytic mechanism. Residue Glu243 is the Proton donor of the active site. N-linked (GlcNAc...) asparagine glycosylation is found at Asn296 and Asn495. The interval 462 to 503 (TFNSGGSNPGGSTTTTKPATSTTTTKATTTATTNTTGPTGTG) is thr-rich linker. The segment covering 462–503 (TFNSGGSNPGGSTTTTKPATSTTTTKATTTATTNTTGPTGTG) has biased composition (low complexity). A disordered region spans residues 462 to 504 (TFNSGGSNPGGSTTTTKPATSTTTTKATTTATTNTTGPTGTGV). A CBM1 domain is found at 503–539 (GVAQPWAQCGGIGYSGPTQCAAPYTCTKQNDYYSQCL). Cystine bridges form between Cys511–Cys528 and Cys522–Cys538.

The protein belongs to the glycosyl hydrolase 7 (cellulase C) family.

It is found in the secreted. The enzyme catalyses Hydrolysis of (1-&gt;4)-beta-D-glucosidic linkages in cellulose and cellotetraose, releasing cellobiose from the non-reducing ends of the chains.. The biological conversion of cellulose to glucose generally requires three types of hydrolytic enzymes: (1) Endoglucanases which cut internal beta-1,4-glucosidic bonds; (2) Exocellobiohydrolases that cut the disaccharide cellobiose from the non-reducing end of the cellulose polymer chain; (3) Beta-1,4-glucosidases which hydrolyze the cellobiose and other short cello-oligosaccharides to glucose. The sequence is that of Probable 1,4-beta-D-glucan cellobiohydrolase B (cbhB) from Aspergillus clavatus (strain ATCC 1007 / CBS 513.65 / DSM 816 / NCTC 3887 / NRRL 1 / QM 1276 / 107).